Reading from the N-terminus, the 237-residue chain is Probable transcriptional regulatory protein Mfl546 (237 aa).

Positions 1–20 (MGRAHEVRAASMAKTAAKKS) are disordered. The span at 9–20 (AASMAKTAAKKS) shows a compositional bias: low complexity.

The protein belongs to the TACO1 family.

The protein localises to the cytoplasm. The sequence is that of Probable transcriptional regulatory protein Mfl546 from Mesoplasma florum (strain ATCC 33453 / NBRC 100688 / NCTC 11704 / L1) (Acholeplasma florum).